A 188-amino-acid polypeptide reads, in one-letter code: MSVLRSLLTAGVLASGLLWSLNGITATPAAQASDDRYEVTQQRNPDAACLDCHKPDTEGMHGKHASVINPNNKLPVTCTNCHGQPSPQHREGVKDVMRFNEPMYKVGEQNSVCMSCHLPEQLQKAFWPHDVHVTKVACASCHSLHPQQDTMQTLSDKGRIKICVDCHSDQRTNPNFNPASVPLLKEQP.

An N-terminal signal peptide occupies residues Met1–Ala32. 15 residues coordinate heme: Cys49, Cys52, His53, Cys78, Cys81, His82, Cys113, Cys116, His117, Cys138, Cys141, His142, Cys163, Cys166, and His167.

Post-translationally, binds 5 heme groups per subunit.

The protein resides in the periplasm. It functions in the pathway energy metabolism; nitrogen metabolism. Functionally, plays a role in nitrite reduction. The chain is Cytochrome c-type protein NrfB (nrfB) from Escherichia coli O6:H1 (strain CFT073 / ATCC 700928 / UPEC).